Consider the following 239-residue polypeptide: Protein Thf1 (239 aa).

Residues Glu183–Arg219 are a coiled coil. The segment covering Lys211–Gln221 has biased composition (basic and acidic residues). A disordered region spans residues Lys211–Gly239.

The protein belongs to the THF1 family.

In terms of biological role, may be involved in photosynthetic membrane biogenesis. The chain is Protein Thf1 from Synechococcus sp. (strain JA-3-3Ab) (Cyanobacteria bacterium Yellowstone A-Prime).